The sequence spans 267 residues: tRNA-cytidine(32) 2-sulfurtransferase (267 aa).

A PP-loop motif motif is present at residues 37–42 (SGGKDS). Cysteine 112, cysteine 115, and cysteine 203 together coordinate [4Fe-4S] cluster.

The protein belongs to the TtcA family. Homodimer. It depends on Mg(2+) as a cofactor. [4Fe-4S] cluster is required as a cofactor.

The protein resides in the cytoplasm. The enzyme catalyses cytidine(32) in tRNA + S-sulfanyl-L-cysteinyl-[cysteine desulfurase] + AH2 + ATP = 2-thiocytidine(32) in tRNA + L-cysteinyl-[cysteine desulfurase] + A + AMP + diphosphate + H(+). The protein operates within tRNA modification. In terms of biological role, catalyzes the ATP-dependent 2-thiolation of cytidine in position 32 of tRNA, to form 2-thiocytidine (s(2)C32). The sulfur atoms are provided by the cysteine/cysteine desulfurase (IscS) system. This chain is tRNA-cytidine(32) 2-sulfurtransferase, found in Dichelobacter nodosus (strain VCS1703A).